Reading from the N-terminus, the 210-residue chain is DNA replication complex GINS protein PSF3 (210 aa).

This sequence belongs to the GINS3/PSF3 family. In terms of assembly, component of the GINS complex which is a heterotetramer of gins1/psf1, gins2/psf2, gins3/psf3 and gins4/sld5. Component of the CMG helicase complex, composed of the mcm2-7 complex, the GINS complex and cdc45.

Its subcellular location is the nucleus. The protein localises to the chromosome. Its function is as follows. Required for correct functioning of the GINS complex, a complex that plays an essential role in the initiation of DNA replication, and progression of DNA replication forks. GINS complex is a core component of CDC45-MCM-GINS (CMG) helicase, the molecular machine that unwinds template DNA during replication, and around which the replisome is built. This is DNA replication complex GINS protein PSF3 from Xenopus laevis (African clawed frog).